Consider the following 222-residue polypeptide: N-(5'-phosphoribosyl)anthranilate isomerase (222 aa).

The protein belongs to the TrpF family.

The catalysed reaction is N-(5-phospho-beta-D-ribosyl)anthranilate = 1-(2-carboxyphenylamino)-1-deoxy-D-ribulose 5-phosphate. Its pathway is amino-acid biosynthesis; L-tryptophan biosynthesis; L-tryptophan from chorismate: step 3/5. In Xanthomonas euvesicatoria pv. vesicatoria (strain 85-10) (Xanthomonas campestris pv. vesicatoria), this protein is N-(5'-phosphoribosyl)anthranilate isomerase.